We begin with the raw amino-acid sequence, 735 residues long: Catalase-peroxidase (735 aa).

The tract at residues 1-31 (MENNTNPISGQGKCPFSGGAAKQSAGAGTRN) is disordered. Low complexity predominate over residues 17-28 (SGGAAKQSAGAG). The segment at residues 103–226 (WHSAGTYRVA…LAAVQMGLIY (124 aa)) is a cross-link (tryptophyl-tyrosyl-methioninium (Trp-Tyr) (with M-252)). Residue His104 is the Proton acceptor of the active site. The segment at residues 226-252 (YVNPEGPNGNPDPLASARDIRETFARM) is a cross-link (tryptophyl-tyrosyl-methioninium (Tyr-Met) (with W-103)). His267 is a binding site for heme b. The segment at 352-371 (KPKNGAGAGTVPDAHNSSKS) is disordered.

The protein belongs to the peroxidase family. Peroxidase/catalase subfamily. In terms of assembly, homodimer or homotetramer. The cofactor is heme b. Formation of the three residue Trp-Tyr-Met cross-link is important for the catalase, but not the peroxidase activity of the enzyme.

The catalysed reaction is H2O2 + AH2 = A + 2 H2O. It carries out the reaction 2 H2O2 = O2 + 2 H2O. Functionally, bifunctional enzyme with both catalase and broad-spectrum peroxidase activity. In Flavobacterium psychrophilum (strain ATCC 49511 / DSM 21280 / CIP 103535 / JIP02/86), this protein is Catalase-peroxidase.